The primary structure comprises 172 residues: Nicotinamide-nucleotide adenylyltransferase (172 aa).

The protein belongs to the archaeal NMN adenylyltransferase family.

Its subcellular location is the cytoplasm. It carries out the reaction beta-nicotinamide D-ribonucleotide + ATP + H(+) = diphosphate + NAD(+). The protein operates within cofactor biosynthesis; NAD(+) biosynthesis; NAD(+) from nicotinamide D-ribonucleotide: step 1/1. This Saccharolobus solfataricus (strain ATCC 35092 / DSM 1617 / JCM 11322 / P2) (Sulfolobus solfataricus) protein is Nicotinamide-nucleotide adenylyltransferase.